Reading from the N-terminus, the 317-residue chain is Small ribosomal subunit biogenesis GTPase RsgA (317 aa).

In terms of domain architecture, CP-type G spans 88–249 (DQYKSKLFAA…LIDSPGFQEF (162 aa)). GTP-binding positions include 136 to 139 (NKID) and 190 to 198 (GQSGMGKST). Zn(2+) contacts are provided by Cys-273, Cys-278, His-280, and Cys-286.

The protein belongs to the TRAFAC class YlqF/YawG GTPase family. RsgA subfamily. As to quaternary structure, monomer. Associates with 30S ribosomal subunit, binds 16S rRNA. The cofactor is Zn(2+).

Its subcellular location is the cytoplasm. Its function is as follows. One of several proteins that assist in the late maturation steps of the functional core of the 30S ribosomal subunit. Helps release RbfA from mature subunits. May play a role in the assembly of ribosomal proteins into the subunit. Circularly permuted GTPase that catalyzes slow GTP hydrolysis, GTPase activity is stimulated by the 30S ribosomal subunit. The protein is Small ribosomal subunit biogenesis GTPase RsgA of Paraburkholderia phymatum (strain DSM 17167 / CIP 108236 / LMG 21445 / STM815) (Burkholderia phymatum).